A 560-amino-acid chain; its full sequence is Interferon alpha/beta receptor 1 (560 aa).

An N-terminal signal peptide occupies residues 1 to 24; the sequence is MLSLLGATTLMLVAGRWVLPAASG. Over 25-437 the chain is Extracellular; it reads EANLKSENVE…EKTKPGNTSK (413 aa). N-linked (GlcNAc...) asparagine glycosylation is found at Asn47 and Asn55. Cys76 and Cys84 are oxidised to a cystine. N-linked (GlcNAc...) asparagine glycosylation is found at Asn85, Asn108, Asn109, and Asn172. Fibronectin type-III domains follow at residues 126–226, 231–329, and 333–433; these read QIGP…TTER, SPEN…TEVK, and FPPV…TKPG. Cys199 and Cys220 are disulfide-bonded. 5 N-linked (GlcNAc...) asparagine glycosylation sites follow: Asn222, Asn285, Asn313, Asn359, and Asn377. A disulfide bond links Cys283 and Cys291. Cys404 and Cys427 are disulfide-bonded. Asn434 carries an N-linked (GlcNAc...) asparagine glycan. A helical membrane pass occupies residues 438–458; that stretch reads TWLIAGICTALFSILVVIYVV. The Cytoplasmic portion of the chain corresponds to 459–560; that stretch reads RVFLRCVKYV…SEEFLQQDSV (102 aa). The S-palmitoyl cysteine moiety is linked to residue Cys464. Residues Tyr467 and Tyr482 each carry the phosphotyrosine; by TYK2 modification. The interval 492–501 is important for interaction with TYK2; that stretch reads LLSTSEEQTE. Phosphoserine is present on residues Ser496 and Ser536. Positions 524–560 are disordered; it reads VHEEYNSQASQDSGNYSNEDENSGSKISEEFLQQDSV. The span at 529 to 540 shows a compositional bias: polar residues; sequence NSQASQDSGNYS.

It belongs to the type II cytokine receptor family. Heterodimer with IFNAR2; forming the receptor for type I interferon. Interacts with TYK2. Interacts with STAT1 and STAT2; the interaction requires its phosphorylation at Tyr-482. Interacts (serine-phosphorylated form) with FBXW11, the substrate recognition component of a SCF (SKP1-CUL1-F-box protein) E3 ubiquitin-protein ligase complex. Interacts with SHMT2; this promotes interaction with ABRAXAS2 and the BRISC complex. Interacts with TRIM10; this interaction prevents association between IFNAR1 and TYK2. Post-translationally, ubiquitinated, leading to its internalization and degradation. Polyubiquitinated via 'Lys-48'-linked and 'Lys-63'-linked ubiquitin chains, leading to receptor internalization and lysosomal degradation. The 'Lys-63'-linked ubiquitin chains are cleaved off by the BRISC complex. In terms of processing, phosphorylated on tyrosine residues in response to interferon-binding: phosphorylation by TYK2 tyrosine kinase creates docking sites for STAT proteins. Phosphorylated on serine residues in response to interferon binding; this promotes interaction with FBXW11 and ubiquitination. Palmitoylation at Cys-464 is required for the activation of STAT1 and STAT2. In terms of tissue distribution, expressed in the endometrium. Expressed in all tissues examined except conceptus at day 15 of pregnancy.

The protein resides in the cell membrane. It localises to the late endosome. Its subcellular location is the lysosome. Functionally, together with IFNAR2, forms the heterodimeric receptor for type I interferons (including interferons alpha, beta, epsilon, omega and kappa). Type I interferon binding activates the JAK-STAT signaling cascade, resulting in transcriptional activation or repression of interferon-regulated genes that encode the effectors of the interferon response. Mechanistically, type I interferon-binding brings the IFNAR1 and IFNAR2 subunits into close proximity with one another, driving their associated Janus kinases (JAKs) (TYK2 bound to IFNAR1 and JAK1 bound to IFNAR2) to cross-phosphorylate one another. The activated kinases phosphorylate specific tyrosine residues on the intracellular domains of IFNAR1 and IFNAR2, forming docking sites for the STAT transcription factors. STAT proteins are then phosphorylated by the JAKs, promoting their translocation into the nucleus to regulate expression of interferon-regulated genes. Can also act independently of IFNAR2: form an active IFNB1 receptor by itself and activate a signaling cascade that does not involve activation of the JAK-STAT pathway. This Ovis aries (Sheep) protein is Interferon alpha/beta receptor 1 (IFNAR1).